A 366-amino-acid chain; its full sequence is Gelsolin-like protein 2 (366 aa).

Gelsolin-like repeat units follow at residues 55–139 (NFKV…DLFL), 177–252 (KHIV…HEFY), and 286–327 (KSTV…AQEK). The interval 100-116 (KSTQDEYCVAAYKTVEL) is actin binding. Positions 104–107 (DEYC) are actin-actin interfilament contact point.

Belongs to the villin/gelsolin family. As to quaternary structure, interacts with actin monomers and filaments. In terms of tissue distribution, expressed in circular and longitudinal muscle, pseudohearts, pharynx and gizzard. Not expressed in seminal vesicles.

It is found in the cytoplasm. The protein resides in the cytoskeleton. Its function is as follows. Calcium-regulated protein that binds to the plus (or barbed) ends of actin monomers or filaments, preventing monomer exchange (end-blocking or capping). Can promote the assembly of monomers into filaments (nucleation) as well as sever existing filaments. The protein is Gelsolin-like protein 2 of Lumbricus terrestris (Common earthworm).